Here is a 214-residue protein sequence, read N- to C-terminus: tRNA (guanine-N(7)-)-methyltransferase (214 aa).

Residues E44, E69, D96, and D118 each contribute to the S-adenosyl-L-methionine site. D118 is a catalytic residue. K122 provides a ligand contact to substrate. The interaction with RNA stretch occupies residues 124-129; the sequence is RHEKRR. Substrate is bound by residues D154 and 192-195; that span reads TEYE.

It belongs to the class I-like SAM-binding methyltransferase superfamily. TrmB family.

It carries out the reaction guanosine(46) in tRNA + S-adenosyl-L-methionine = N(7)-methylguanosine(46) in tRNA + S-adenosyl-L-homocysteine. It participates in tRNA modification; N(7)-methylguanine-tRNA biosynthesis. Its function is as follows. Catalyzes the formation of N(7)-methylguanine at position 46 (m7G46) in tRNA. The chain is tRNA (guanine-N(7)-)-methyltransferase from Lacticaseibacillus casei (strain BL23) (Lactobacillus casei).